The chain runs to 469 residues: Acetyl-CoA decarbonylase/synthase complex subunit beta 2 (469 aa).

The [Ni-Fe-S] cluster site is built by C187, C190, C276, and C278.

The protein belongs to the CdhC family. In terms of assembly, monomer. The ACDS complex is made up of alpha, epsilon, beta, gamma and delta chains with a probable stoichiometry of (alpha(2)epsilon(2))(4)-beta(8)-(gamma(1)delta(1))(8) (Potential). The cofactor is [Ni-Fe-S] cluster.

It catalyses the reaction Co(I)-[corrinoid Fe-S protein] + acetyl-CoA + H(+) = methyl-Co(III)-[corrinoid Fe-S protein] + CO + CoA. Part of a complex that catalyzes the reversible cleavage of acetyl-CoA, allowing autotrophic growth from CO(2). The alpha-epsilon complex generates CO from CO(2), while the beta subunit (this protein) combines the CO with CoA and a methyl group to form acetyl-CoA. The methyl group, which is incorporated into acetyl-CoA, is transferred to the beta subunit by a corrinoid iron-sulfur protein (the gamma-delta complex). The sequence is that of Acetyl-CoA decarbonylase/synthase complex subunit beta 2 (cdhC2) from Methanocaldococcus jannaschii (strain ATCC 43067 / DSM 2661 / JAL-1 / JCM 10045 / NBRC 100440) (Methanococcus jannaschii).